The following is a 295-amino-acid chain: Ethanolamine ammonia-lyase small subunit (295 aa).

Residues valine 207, glutamate 228, and cysteine 258 each coordinate adenosylcob(III)alamin.

The protein belongs to the EutC family. As to quaternary structure, the basic unit is a heterodimer which dimerizes to form tetramers. The heterotetramers trimerize; 6 large subunits form a core ring with 6 small subunits projecting outwards. Requires adenosylcob(III)alamin as cofactor.

Its subcellular location is the bacterial microcompartment. It catalyses the reaction ethanolamine = acetaldehyde + NH4(+). It functions in the pathway amine and polyamine degradation; ethanolamine degradation. Its function is as follows. Catalyzes the deamination of various vicinal amino-alcohols to oxo compounds. Allows this organism to utilize ethanolamine as the sole source of nitrogen and carbon in the presence of external vitamin B12. The polypeptide is Ethanolamine ammonia-lyase small subunit (Escherichia coli (strain SMS-3-5 / SECEC)).